Here is a 154-residue protein sequence, read N- to C-terminus: Urease accessory protein UreE (154 aa).

Residues 135–154 form a disordered region; that stretch reads YGHGRTFGHDHGHAHDHHHA.

The protein belongs to the UreE family.

Its subcellular location is the cytoplasm. Involved in urease metallocenter assembly. Binds nickel. Probably functions as a nickel donor during metallocenter assembly. In Paracoccus denitrificans (strain Pd 1222), this protein is Urease accessory protein UreE.